The sequence spans 152 residues: Deoxyuridine 5'-triphosphate nucleotidohydrolase (152 aa).

Substrate-binding positions include 71-73 (RSG), N84, 88-90 (LID), and M98.

The protein belongs to the dUTPase family. Mg(2+) is required as a cofactor.

It catalyses the reaction dUTP + H2O = dUMP + diphosphate + H(+). Its pathway is pyrimidine metabolism; dUMP biosynthesis; dUMP from dCTP (dUTP route): step 2/2. Its function is as follows. This enzyme is involved in nucleotide metabolism: it produces dUMP, the immediate precursor of thymidine nucleotides and it decreases the intracellular concentration of dUTP so that uracil cannot be incorporated into DNA. In Shewanella amazonensis (strain ATCC BAA-1098 / SB2B), this protein is Deoxyuridine 5'-triphosphate nucleotidohydrolase.